The primary structure comprises 242 residues: Biosynthetic peptidoglycan transglycosylase (242 aa).

The chain crosses the membrane as a helical span at residues 12 to 31 (LLFWLMLASALLVLALRWLP).

The protein belongs to the glycosyltransferase 51 family.

It is found in the cell inner membrane. The enzyme catalyses [GlcNAc-(1-&gt;4)-Mur2Ac(oyl-L-Ala-gamma-D-Glu-L-Lys-D-Ala-D-Ala)](n)-di-trans,octa-cis-undecaprenyl diphosphate + beta-D-GlcNAc-(1-&gt;4)-Mur2Ac(oyl-L-Ala-gamma-D-Glu-L-Lys-D-Ala-D-Ala)-di-trans,octa-cis-undecaprenyl diphosphate = [GlcNAc-(1-&gt;4)-Mur2Ac(oyl-L-Ala-gamma-D-Glu-L-Lys-D-Ala-D-Ala)](n+1)-di-trans,octa-cis-undecaprenyl diphosphate + di-trans,octa-cis-undecaprenyl diphosphate + H(+). Its pathway is cell wall biogenesis; peptidoglycan biosynthesis. Its function is as follows. Peptidoglycan polymerase that catalyzes glycan chain elongation from lipid-linked precursors. The sequence is that of Biosynthetic peptidoglycan transglycosylase from Ectopseudomonas mendocina (strain ymp) (Pseudomonas mendocina).